Reading from the N-terminus, the 1235-residue chain is ATP-dependent helicase/nuclease subunit A (1235 aa).

The UvrD-like helicase ATP-binding domain maps to 12-482 (ALWTDDQWKA…IDLSQNFRSR (471 aa)). Residue 33–40 (AAAGSGKT) coordinates ATP. One can recognise a UvrD-like helicase C-terminal domain in the interval 509-800 (AAELTLGASF…RMMTIHASKG (292 aa)).

It belongs to the helicase family. AddA subfamily. In terms of assembly, heterodimer of AddA and AddB/RexB. Mg(2+) is required as a cofactor.

The catalysed reaction is Couples ATP hydrolysis with the unwinding of duplex DNA by translocating in the 3'-5' direction.. It carries out the reaction ATP + H2O = ADP + phosphate + H(+). The heterodimer acts as both an ATP-dependent DNA helicase and an ATP-dependent, dual-direction single-stranded exonuclease. Recognizes the chi site generating a DNA molecule suitable for the initiation of homologous recombination. The AddA nuclease domain is required for chi fragment generation; this subunit has the helicase and 3' -&gt; 5' nuclease activities. This Listeria innocua serovar 6a (strain ATCC BAA-680 / CLIP 11262) protein is ATP-dependent helicase/nuclease subunit A.